The sequence spans 1316 residues: DNA-directed RNA polymerase subunit beta' (1316 aa).

Zn(2+) contacts are provided by C60, C62, C75, and C78. D535, D537, and D539 together coordinate Mg(2+). Zn(2+) is bound by residues C891, C968, C975, and C978.

The protein belongs to the RNA polymerase beta' chain family. The RNAP catalytic core consists of 2 alpha, 1 beta, 1 beta' and 1 omega subunit. When a sigma factor is associated with the core the holoenzyme is formed, which can initiate transcription. Requires Mg(2+) as cofactor. Zn(2+) is required as a cofactor.

It catalyses the reaction RNA(n) + a ribonucleoside 5'-triphosphate = RNA(n+1) + diphosphate. Its function is as follows. DNA-dependent RNA polymerase catalyzes the transcription of DNA into RNA using the four ribonucleoside triphosphates as substrates. This chain is DNA-directed RNA polymerase subunit beta', found in Mycolicibacterium paratuberculosis (strain ATCC BAA-968 / K-10) (Mycobacterium paratuberculosis).